The primary structure comprises 524 residues: 2-isopropylmalate synthase (524 aa).

The Pyruvate carboxyltransferase domain maps to 15-277; that stretch reads VVIFDTTMRD…ETKIDTTHIT (263 aa). Mn(2+) is bound by residues Asp-24, His-212, His-214, and Asn-248. Residues 401–524 are regulatory domain; the sequence is RVQRLRVVAG…RPEAAIASGF (124 aa).

Belongs to the alpha-IPM synthase/homocitrate synthase family. LeuA type 1 subfamily. As to quaternary structure, homodimer. Mn(2+) serves as cofactor.

Its subcellular location is the cytoplasm. The enzyme catalyses 3-methyl-2-oxobutanoate + acetyl-CoA + H2O = (2S)-2-isopropylmalate + CoA + H(+). The protein operates within amino-acid biosynthesis; L-leucine biosynthesis; L-leucine from 3-methyl-2-oxobutanoate: step 1/4. Its function is as follows. Catalyzes the condensation of the acetyl group of acetyl-CoA with 3-methyl-2-oxobutanoate (2-ketoisovalerate) to form 3-carboxy-3-hydroxy-4-methylpentanoate (2-isopropylmalate). This chain is 2-isopropylmalate synthase, found in Caulobacter sp. (strain K31).